We begin with the raw amino-acid sequence, 418 residues long: Tyrosine--tRNA ligase (418 aa).

Tyrosine 34 is an L-tyrosine binding site. The 'HIGH' region motif lies at 39 to 48 (PTADSLHLGH). Positions 169 and 173 each coordinate L-tyrosine. The short motif at 229–233 (KFGKS) is the 'KMSKS' region element. Lysine 232 is a binding site for ATP. The region spanning 352–418 (NNIVELLVSS…GKKKYFVLTY (67 aa)) is the S4 RNA-binding domain.

The protein belongs to the class-I aminoacyl-tRNA synthetase family. TyrS type 1 subfamily. As to quaternary structure, homodimer.

It localises to the cytoplasm. The catalysed reaction is tRNA(Tyr) + L-tyrosine + ATP = L-tyrosyl-tRNA(Tyr) + AMP + diphosphate + H(+). Catalyzes the attachment of tyrosine to tRNA(Tyr) in a two-step reaction: tyrosine is first activated by ATP to form Tyr-AMP and then transferred to the acceptor end of tRNA(Tyr). The chain is Tyrosine--tRNA ligase from Streptococcus pneumoniae serotype 19F (strain G54).